The sequence spans 362 residues: Peptide chain release factor 1 (362 aa).

At Gln-237 the chain carries N5-methylglutamine.

The protein belongs to the prokaryotic/mitochondrial release factor family. Methylated by PrmC. Methylation increases the termination efficiency of RF1.

The protein localises to the cytoplasm. Its function is as follows. Peptide chain release factor 1 directs the termination of translation in response to the peptide chain termination codons UAG and UAA. This Aliivibrio salmonicida (strain LFI1238) (Vibrio salmonicida (strain LFI1238)) protein is Peptide chain release factor 1.